Reading from the N-terminus, the 72-residue chain is Translation initiation factor IF-1 (72 aa).

Residues 1–72 (MAKEDCIEMQ…SKARIIFRAR (72 aa)) form the S1-like domain.

Belongs to the IF-1 family. In terms of assembly, component of the 30S ribosomal translation pre-initiation complex which assembles on the 30S ribosome in the order IF-2 and IF-3, IF-1 and N-formylmethionyl-tRNA(fMet); mRNA recruitment can occur at any time during PIC assembly.

It localises to the cytoplasm. In terms of biological role, one of the essential components for the initiation of protein synthesis. Stabilizes the binding of IF-2 and IF-3 on the 30S subunit to which N-formylmethionyl-tRNA(fMet) subsequently binds. Helps modulate mRNA selection, yielding the 30S pre-initiation complex (PIC). Upon addition of the 50S ribosomal subunit IF-1, IF-2 and IF-3 are released leaving the mature 70S translation initiation complex. The sequence is that of Translation initiation factor IF-1 from Actinobacillus pleuropneumoniae serotype 5b (strain L20).